We begin with the raw amino-acid sequence, 1126 residues long: MVKKRQADSRDHDCSTDSGNEDLHHRKGLGSPGQSDGATPTTASCQHIKKAVDAARLRRLLKSTGLLYECSQCQKLGKTAGSAAGAGASEGAVGPGGNPVTFEFDNTLWLCLKCGSQLCGRARHKHALEHYQTPHSDSHALAMNTRSFDIWCYECDMKICSNLRKNLLECVELVKKLAQKPPTSTVTPSTPTISYIEEKLKAALEHLTPIVPMTGGSFDDSSSRGSLAAAGGGGGVGSSRNRQVAIPMPPPEPSSGLSTSDSLTSVPGMAKRIDQYSATTNGNTGNKRLLTLETPRIENERLPRVRGLTNLGNTCFFNAVMQCLAQTPFLLSVLKELSEPGEEFILPGGTFTIKDKGDIELPMIKGTLSSWGGLTAALANALEELQAGGSVFTPRKLFDRLCVKCPQFTGGDQHDAHELLRQLLESVRNEDLKRYQRVILQNLGYKDQDVNSVSEEMRQKCKIYGNQAGDRILRPEQVFRGFLVSTLTCQDCHNVSSRHEYFLDMSLPVAVEKPQPPQRRKPSPELSLTSSSSSVTPSTGQPTINTKFTDGSVNFTASSPSFFLHAHEAASLGPSKSQVKKEKERQRKAKRAAKKRQKSSLNLNGNDSGNGNELAESVDQDDASLASLGAGDGQANDGLEQTNGQTEDSTTSSVTTSEHSDADVEDNLVEDTAAPSTNNVPSSTASLTAPSKTYMDSNGNAQPPGEKRDDTPEHMDKDSLEEDENDSGIATSPAPTATNSSTSTSATGNNNSVAGSGLSGSSGALEDPLAPASLVTAGLSEKGASVIRQVSVGAEQGASNGTEDADGEAKAIEQPEKTPSQAQAMAQAQARTKRVRTQSYSDWSTTIAPRYQCEDGECSVQSCLNNFTAVELMTGQNKVGCDSCTQRINGSDPKAKSVNTNATKQLLVSSPPAVLILHLKRFQLGPRCIFRKLTRPVSYPNLLDIAAFCGSKVKNLPNIDRKQKKLLYALYGVVEHSGGMYGGHYTAYVKVRPKVAPGDKRWKFLPHGSKAELDQDDDQLKKLEELLAKEKAREQHLKVLDDSDDFSNSSSNSSTSDESQTPATPLEEQQTQQAQQPQQPQQLEEAANVRAPPGKWYYVSDSRVQEVSEDTALKAQAYLLFYERIY.

A compositionally biased stretch (basic and acidic residues) spans 1–15; that stretch reads MVKKRQADSRDHDCS. The segment at 1–44 is disordered; sequence MVKKRQADSRDHDCSTDSGNEDLHHRKGLGSPGQSDGATPTTAS. The span at 32–44 shows a compositional bias: polar residues; that stretch reads PGQSDGATPTTAS. The UBP-type zinc-finger motif lies at 43–181; that stretch reads ASCQHIKKAV…ELVKKLAQKP (139 aa). Zn(2+)-binding residues include C45, H47, C70, C73, C111, C114, C119, H126, H130, H139, C152, and C155. Composition is skewed to low complexity over residues 215–229 and 254–264; these read GGSF…SLAA and SSGLSTSDSLT. Residues 215-264 form a disordered region; sequence GGSFDDSSSRGSLAAAGGGGGVGSSRNRQVAIPMPPPEPSSGLSTSDSLT. C315 functions as the Nucleophile in the catalytic mechanism. 3 disordered regions span residues 513 to 547, 570 to 762, and 795 to 833; these read KPQP…INTK, ASLG…SGSS, and EQGA…ARTK. Residues 524-539 show a composition bias toward low complexity; sequence PELSLTSSSSSVTPST. A compositionally biased stretch (basic residues) spans 586–598; the sequence is QRKAKRAAKKRQK. 2 stretches are compositionally biased toward low complexity: residues 599 to 614 and 646 to 657; these read SSLN…GNEL and TEDSTTSSVTTS. Polar residues predominate over residues 674 to 701; sequence APSTNNVPSSTASLTAPSKTYMDSNGNA. Positions 705–718 are enriched in basic and acidic residues; it reads GEKRDDTPEHMDKD. Residues 730-762 show a composition bias toward low complexity; sequence ATSPAPTATNSSTSTSATGNNNSVAGSGLSGSS. Residues 807 to 816 show a composition bias toward basic and acidic residues; the sequence is GEAKAIEQPE. Positions 821–830 are enriched in low complexity; that stretch reads QAQAMAQAQA. Residue H984 is the Proton acceptor of the active site. Residues 1037 to 1089 form a disordered region; that stretch reads LKVLDDSDDFSNSSSNSSTSDESQTPATPLEEQQTQQAQQPQQPQQLEEAANV. The segment covering 1046-1086 has biased composition (low complexity); sequence FSNSSSNSSTSDESQTPATPLEEQQTQQAQQPQQPQQLEEA.

It belongs to the peptidase C19 family.

It catalyses the reaction Thiol-dependent hydrolysis of ester, thioester, amide, peptide and isopeptide bonds formed by the C-terminal Gly of ubiquitin (a 76-residue protein attached to proteins as an intracellular targeting signal).. Its function is as follows. Involved in the regulation of DNA damage repair. The protein is Ubiquitin carboxyl-terminal hydrolase 16/45 of Drosophila melanogaster (Fruit fly).